The following is a 125-amino-acid chain: Class III hydrophobin G (125 aa).

The signal sequence occupies residues 1 to 20 (MKPSIVTFLMLAAVTAAVSA). 4 disulfide bridges follow: Cys-54-Cys-107, Cys-60-Cys-101, Cys-61-Cys-94, and Cys-108-Cys-122.

This sequence belongs to the fungal hydrophobin family. In terms of assembly, self-assembles to form functional amyloid fibrils called rodlets. Self-assembly into fibrillar rodlets occurs spontaneously at hydrophobic:hydrophilic interfaces and the rodlets further associate laterally to form amphipathic monolayers.

Its subcellular location is the secreted. It localises to the cell wall. Its function is as follows. Aerial growth, conidiation, and dispersal of filamentous fungi in the environment rely upon a capability of their secreting small amphipathic proteins called hydrophobins (HPBs) with low sequence identity. Class I can self-assemble into an outermost layer of rodlet bundles on aerial cell surfaces, conferring cellular hydrophobicity that supports fungal growth, development and dispersal; whereas Class II form highly ordered films at water-air interfaces through intermolecular interactions but contribute nothing to the rodlet structure. RodF and rodG belong to Class III, which contains hydrophobins with intermediate (between classes I and II) or atypical characteristics. RodG, unlike rodA, is not required for rodlet formation. This chain is Class III hydrophobin G, found in Aspergillus fumigatus (strain ATCC MYA-4609 / CBS 101355 / FGSC A1100 / Af293) (Neosartorya fumigata).